The chain runs to 445 residues: Argininosuccinate synthase (445 aa).

Residues 17 to 25 and Ala43 contribute to the ATP site; that span reads AFSGGLDTS. Position 99 (Tyr99) interacts with L-citrulline. The ATP site is built by Gly129 and Thr131. L-aspartate-binding residues include Thr131, Asn135, and Asp136. Asn135 is an L-citrulline binding site. Asp136 serves as a coordination point for ATP. L-citrulline contacts are provided by Arg139 and Ser192. Asp194 contributes to the ATP binding site. L-citrulline is bound by residues Thr201, Glu203, and Glu280.

The protein belongs to the argininosuccinate synthase family. Type 2 subfamily. In terms of assembly, homotetramer.

Its subcellular location is the cytoplasm. It carries out the reaction L-citrulline + L-aspartate + ATP = 2-(N(omega)-L-arginino)succinate + AMP + diphosphate + H(+). Its pathway is amino-acid biosynthesis; L-arginine biosynthesis; L-arginine from L-ornithine and carbamoyl phosphate: step 2/3. This chain is Argininosuccinate synthase (argG), found in Burkholderia multivorans (strain ATCC 17616 / 249).